A 430-amino-acid chain; its full sequence is UDP-N-acetylglucosamine 1-carboxyvinyltransferase (430 aa).

22–23 (KN) lines the phosphoenolpyruvate pocket. Position 102 (Arg102) interacts with UDP-N-acetyl-alpha-D-glucosamine. The active-site Proton donor is the Cys126. At Cys126 the chain carries 2-(S-cysteinyl)pyruvic acid O-phosphothioketal. UDP-N-acetyl-alpha-D-glucosamine is bound by residues 131-135 (RPVDL), 172-175 (KVSV), Asp317, and Ile339.

The protein belongs to the EPSP synthase family. MurA subfamily.

It localises to the cytoplasm. The catalysed reaction is phosphoenolpyruvate + UDP-N-acetyl-alpha-D-glucosamine = UDP-N-acetyl-3-O-(1-carboxyvinyl)-alpha-D-glucosamine + phosphate. Its pathway is cell wall biogenesis; peptidoglycan biosynthesis. In terms of biological role, cell wall formation. Adds enolpyruvyl to UDP-N-acetylglucosamine. This is UDP-N-acetylglucosamine 1-carboxyvinyltransferase from Rhizobium johnstonii (strain DSM 114642 / LMG 32736 / 3841) (Rhizobium leguminosarum bv. viciae).